The chain runs to 622 residues: Wall-associated receptor kinase-like 21 (622 aa).

An N-terminal signal peptide occupies residues 1 to 21 (MAETPQPYLIFVFFVFTLTVA). Residues 22-247 (TQTTGSVKCK…LVYKRKGLHK (226 aa)) lie on the Extracellular side of the membrane. 5 N-linked (GlcNAc...) asparagine glycosylation sites follow: N50, N114, N131, N160, and N195. Residues 248–268 (LVVLGTAGILVGVLVIVVLIA) traverse the membrane as a helical segment. Over 269–622 (TYFFRNKQSA…MKRQQSFPRE (354 aa)) the chain is Cytoplasmic. Residues 314–594 (FSDKNMLGTG…EITEDLHRIK (281 aa)) enclose the Protein kinase domain. Residues 320–328 (LGTGAYGTV) and K342 contribute to the ATP site. Residue D439 is the Proton acceptor of the active site.

This sequence belongs to the protein kinase superfamily. Ser/Thr protein kinase family.

It is found in the membrane. The enzyme catalyses L-seryl-[protein] + ATP = O-phospho-L-seryl-[protein] + ADP + H(+). It catalyses the reaction L-threonyl-[protein] + ATP = O-phospho-L-threonyl-[protein] + ADP + H(+). In terms of biological role, serine/threonine-protein kinase that may function as a signaling receptor of extracellular matrix component. In Arabidopsis thaliana (Mouse-ear cress), this protein is Wall-associated receptor kinase-like 21 (WAKL21).